Reading from the N-terminus, the 327-residue chain is L-lactate dehydrogenase (327 aa).

NAD(+) contacts are provided by residues Val18, Asp39, Lys44, Tyr69, and 83 to 84 (GA). Residues Gln86, Arg92, and 124–127 (NPVD) each bind substrate. Residues 122-124 (AAN) and Ser147 contribute to the NAD(+) site. 152-155 (DSAR) provides a ligand contact to substrate. Positions 157 and 172 each coordinate beta-D-fructose 1,6-bisphosphate. His179 acts as the Proton acceptor in catalysis. Tyr224 is modified (phosphotyrosine). A substrate-binding site is contributed by Thr233.

It belongs to the LDH/MDH superfamily. LDH family. In terms of assembly, homotetramer.

The protein resides in the cytoplasm. The catalysed reaction is (S)-lactate + NAD(+) = pyruvate + NADH + H(+). The protein operates within fermentation; pyruvate fermentation to lactate; (S)-lactate from pyruvate: step 1/1. Allosterically activated by fructose 1,6-bisphosphate (FBP). Catalyzes the conversion of lactate to pyruvate. This chain is L-lactate dehydrogenase, found in Streptococcus equi subsp. zooepidemicus (strain H70).